The sequence spans 99 residues: Aspartyl/glutamyl-tRNA(Asn/Gln) amidotransferase subunit C (99 aa).

Belongs to the GatC family. As to quaternary structure, heterotrimer of A, B and C subunits.

The enzyme catalyses L-glutamyl-tRNA(Gln) + L-glutamine + ATP + H2O = L-glutaminyl-tRNA(Gln) + L-glutamate + ADP + phosphate + H(+). It carries out the reaction L-aspartyl-tRNA(Asn) + L-glutamine + ATP + H2O = L-asparaginyl-tRNA(Asn) + L-glutamate + ADP + phosphate + 2 H(+). Allows the formation of correctly charged Asn-tRNA(Asn) or Gln-tRNA(Gln) through the transamidation of misacylated Asp-tRNA(Asn) or Glu-tRNA(Gln) in organisms which lack either or both of asparaginyl-tRNA or glutaminyl-tRNA synthetases. The reaction takes place in the presence of glutamine and ATP through an activated phospho-Asp-tRNA(Asn) or phospho-Glu-tRNA(Gln). In Thermobifida fusca (strain YX), this protein is Aspartyl/glutamyl-tRNA(Asn/Gln) amidotransferase subunit C.